The primary structure comprises 834 residues: Transcription intermediary factor 1-beta (834 aa).

An N-acetylalanine modification is found at alanine 2. Over residues 13–23 (AATAASAASGS) the composition is skewed to low complexity. Residues 13–56 (AATAASAASGSPGSGEGSAGGEKRPAASSAAAASAAASSPAGGG) form a disordered region. Serine 23, serine 26, and serine 30 each carry phosphoserine. A Glycyl lysine isopeptide (Lys-Gly) (interchain with G-Cter in SUMO2) cross-link involves residue lysine 35. Low complexity predominate over residues 38-52 (AASSAAAASAAASSP). The residue at position 51 (serine 51) is a Phosphoserine. Residues 66-122 (CGVCRERLRPERDPRLLPCLHSACSACLGPATPAAANNSGDGGSAGDGAMVDCPVCK) form an RING-type zinc finger. A Glycyl lysine isopeptide (Lys-Gly) (interchain with G-Cter in SUMO2) cross-link involves residue lysine 128. A Phosphoserine modification is found at serine 139. The B box-type 1 zinc-finger motif lies at 149–196 (DANQCCTSCEDNAPATSYCVECSEPLCETCVEAHQRVKYTKDHTVRST). Cysteine 154, cysteine 157, cysteine 178, and histidine 182 together coordinate Zn(2+). A Glycyl lysine isopeptide (Lys-Gly) (interchain with G-Cter in SUMO2) cross-link involves residue lysine 200. A B box-type 2 zinc finger spans residues 205 to 246 (ERTVYCNVHKHEPLVLFCESCDTLTCRDCQLNAHKDHQYQFL). Cysteine 210, histidine 213, cysteine 233, and histidine 238 together coordinate Zn(2+). A leucine zipper alpha helical coiled-coil region region spans residues 247-377 (EDAVRNQRKL…LIYFQLHRAL (131 aa)). Residues 248–377 (DAVRNQRKLL…LIYFQLHRAL (130 aa)) are interaction with MAGEC2. Glycyl lysine isopeptide (Lys-Gly) (interchain with G-Cter in SUMO2) cross-links involve residues lysine 255 and lysine 262. An N6-acetyllysine modification is found at lysine 267. Residue lysine 273 forms a Glycyl lysine isopeptide (Lys-Gly) (interchain with G-Cter in SUMO2) linkage. N6-acetyllysine; alternate is present on lysine 305. A Glycyl lysine isopeptide (Lys-Gly) (interchain with G-Cter in SUMO2); alternate cross-link involves residue lysine 305. Lysine 320 participates in a covalent cross-link: Glycyl lysine isopeptide (Lys-Gly) (interchain with G-Cter in SUMO2). N6-acetyllysine is present on lysine 341. A Glycyl lysine isopeptide (Lys-Gly) (interchain with G-Cter in SUMO2) cross-link involves residue lysine 367. Residues 367–371 (KLIYF) form an involved in binding PPP1CA region. An N6-acetyllysine; alternate modification is found at lysine 378. A Glycyl lysine isopeptide (Lys-Gly) (interchain with G-Cter in SUMO2); alternate cross-link involves residue lysine 378. Lysine 378 is covalently cross-linked (Glycyl lysine isopeptide (Lys-Gly) (interchain with G-Cter in SUMO1); alternate). A Glycyl lysine isopeptide (Lys-Gly) (interchain with G-Cter in SUMO2) cross-link involves residue lysine 408. The tract at residues 412–480 (ERPGTNSTGP…SRSGEGEVSG (69 aa)) is disordered. Residue serine 418 is modified to Phosphoserine. Lysine 435 is covalently cross-linked (Glycyl lysine isopeptide (Lys-Gly) (interchain with G-Cter in SUMO2)). Residues 435–444 (KQGSGSSQPM) are compositionally biased toward polar residues. Residues serine 438, serine 440, and serine 454 each carry the phosphoserine modification. Lysine 469 is covalently cross-linked (Glycyl lysine isopeptide (Lys-Gly) (interchain with G-Cter in SUMO2); alternate). Lysine 469 is covalently cross-linked (Glycyl lysine isopeptide (Lys-Gly) (interchain with G-Cter in SUMO1); alternate). At arginine 470 the chain carries Citrulline. Serine 471 carries the phosphoserine modification. Arginine 472 carries the post-translational modification Citrulline. Phosphoserine is present on residues serine 473, serine 479, and serine 489. An HP1 box region spans residues 476–513 (GEVSGLLRKVPRVSLERLDLDLTSDSQPPVFKVFPGST). A PxVxL motif motif is present at residues 481 to 494 (LLRKVPRVSLERLD). Position 498 is a phosphothreonine (threonine 498). Serine 501 carries the post-translational modification Phosphoserine. Lysine 507 is covalently cross-linked (Glycyl lysine isopeptide (Lys-Gly) (interchain with G-Cter in SUMO2)). Lysine 554 is covalently cross-linked (Glycyl lysine isopeptide (Lys-Gly) (interchain with G-Cter in SUMO2); alternate). A Glycyl lysine isopeptide (Lys-Gly) (interchain with G-Cter in SUMO); alternate cross-link involves residue lysine 554. Lysine 575 is covalently cross-linked (Glycyl lysine isopeptide (Lys-Gly) (interchain with G-Cter in SUMO2)). Residues 581–602 (LTEGPGAEGPRLASPSGSTSSG) are disordered. The residue at position 594 (serine 594) is a Phosphoserine. Residues 625–672 (ATICRVCQKPGDLVMCNQCEFCFHLDCHLPALQDVPGEEWSCSLCHVL) form a PHD-type zinc finger. A Glycyl lysine isopeptide (Lys-Gly) (interchain with G-Cter in SUMO) cross-link involves residue lysine 676. A phosphoserine mark is found at serine 683, serine 689, and serine 697. The Bromo domain occupies 695-799 (KLSPANQRKC…RFFETRMNDA (105 aa)). A Glycyl lysine isopeptide (Lys-Gly) (interchain with G-Cter in SUMO2); alternate cross-link involves residue lysine 750. Residue lysine 750 forms a Glycyl lysine isopeptide (Lys-Gly) (interchain with G-Cter in SUMO1); alternate linkage. Lysine 750 participates in a covalent cross-link: Glycyl lysine isopeptide (Lys-Gly) (interchain with G-Cter in SUMO); alternate. Serine 752 carries the phosphoserine modification. At tyrosine 755 the chain carries Phosphotyrosine. Serine 757 bears the Phosphoserine mark. Residues lysine 770, lysine 774, and lysine 779 each carry the N6-acetyllysine; alternate modification. Glycyl lysine isopeptide (Lys-Gly) (interchain with G-Cter in SUMO2); alternate cross-links involve residues lysine 770, lysine 774, and lysine 779. Lysine 779 is covalently cross-linked (Glycyl lysine isopeptide (Lys-Gly) (interchain with G-Cter in SUMO1); alternate). Position 784 is a phosphoserine (serine 784). Lysine 804 is covalently cross-linked (Glycyl lysine isopeptide (Lys-Gly) (interchain with G-Cter in SUMO2)). Phosphoserine; by ATM and ATR and dsDNA kinase is present on serine 824.

The protein belongs to the TRIM/RBCC family. As to quaternary structure, oligomer; the RBCC domain homotrimerizes and interacts with one molecule of KRAB to form the KRAB-KAP1 corepressor complex. Interacts with SETX. Binding to a KRAB domain is an absolute requirement for silencing gene expression. Interacts with a number of KRAB-ZFP proteins including ZNF10, ZFP53, ZFP68, ZNF382 and ZNF256. Interacts with NCOR1, NR3C1 and CHD3. Interacts with CEBPB (via the RING-type and PHD-type zinc fingers). Interacts with CBX5 (via the PxVxL motif); the interaction occurs in interphase nuclei and competes for binding POGZ. Interacts with POGZ; the interaction competes for interaction with CBX5. Interacts with SETDB1; the interaction is enhanced by KAP1 sumoylation, stimulates SETDB1 histone methyltransferase activity and gene silencing. Interacts (via the PHD-type zinc finger) with UBE2I; the interaction is required for sumoylation and repressor activity. Component of the TRIM28/KAP1-ERBB4-MDM2 complex involved in connecting growth factor and DNA damage responses. Interacts directly with ERBB4; the interaction represses ERBB4-mediated transcription activity. Interacts with MDM2; the interaction contributes to p53/TP53 inactivation. Component of the TRIM28/KAP1-MDM2-p53/TP53; involved in regulating p53/TP53 stabilization and activity. Interacts (via the leucine zipper alpha helical coiled-coil) with E2F1 (central region); the interaction inhibits E2F1 acetylation and transcriptional activity. Interacts with PPP1CA; the interaction dephosphorylates TRIM28 at Ser-824 and forms a complex at the p21 promoter site. Interacts with PPP1CB; the interaction is weak but is increased on dephosphorylation at Ser-824. Interacts with CEBPB and NR3C1. Interacts with CBX5 (via the PxVxL motif); the interaction occurs in interphase nuclei and competes for binding POGZ. Component of a ternary complex that includes TRIM28, a HP1 protein (CBX1, CBX3 OR CBX5), a KRAB domain-containing protein, and DNA. Interacts with SMARCAD1. Interacts with, and sumoylates IRF7. Interacts with MAGEC2. Part of a complex composed of TRIM28, HDAC1, HDAC2 and EHMT2. Interacts (via the RBCC domain) with KOX1 (via the KRAB domain), ZNF268 (via the KRAB domain) and ZNF300 (via the KRAB domain); the interactions increase KOX1, ZNF268 and ZNF300 nuclear localization activities. Interacts with AICDA. The large PER complex involved in the histone methylation is composed of at least PER2, CBX3, TRIM28, SUV39H1 and/or SUV39H2; CBX3 mediates the formation of the complex. Interacts with NR4A3; the interactions potentiates NR4A3 activity on NurRE promoter. Interacts (unphosphorylated or phosphorylated form) with ZBTB1 (via BTB domain). Probably part of a corepressor complex containing ZNF304, TRIM28, SETDB1 and DNMT1. Interacts with ATRX. Forms a complex with ATRX, SETDB1 and ZNF274. Interacts with ZFP568; the interaction mediates ZFP568 transcriptional repression activity. Interacts with RRP1B. Interacts with CRY1. Interacts with ZNF263; recruited to the SIX3 promoter along with other proteins involved in chromatin modification and transcriptional corepression where it contributes to transcriptional repression. Interacts with CYREN (via XLF motif). Interacts with TRIM17; this interaction prevents TRIM28 activity. Interacts with ZNF746. Interacts with PHF13. Interacts with ZNF354C. Interacts with ZNF432; the interaction is independent of PARP1. Post-translationally, ATM-induced phosphorylation on Ser-824 represses sumoylation leading to the de-repression of expression of a subset of genes involved in cell cycle control and apoptosis in response to genotoxic stress. Dephosphorylation by the phosphatases, PPP1CA and PP1CB forms, allows sumoylation and expression of TRIM28 target genes. Sumoylation/desumoylation events regulate TRIM28-mediated transcriptional repression. Sumoylation is required for interaction with CHD3 and SETDB1 and the corepressor activity. Represses and is repressed by Ser-824 phosphorylation. Enhances the TRIM28 corepressor activity, inhibiting transcriptional activity of a number of genes including GADD45A and CDKN1A/p21. Lys-554, Lys-779 and Lys-804 are the major sites of sumoylation. In response to Dox-induced DNA damage, enhanced phosphorylation on Ser-824 prevents sumoylation and allows de-repression of CDKN1A/p21. In terms of processing, auto-ubiquitinated; enhanced by MAGEA2 and MAGEC2. Post-translationally, citrullinated by PADI4. ADP-ribosylated by SIRT6, promoting TRIM28/KAP1 interaction with CBX5, thereby contributing to the packaging of LINE-1 retrotransposon elements into transcriptionally repressive heterochromatin.

It localises to the nucleus. It carries out the reaction S-ubiquitinyl-[E2 ubiquitin-conjugating enzyme]-L-cysteine + [acceptor protein]-L-lysine = [E2 ubiquitin-conjugating enzyme]-L-cysteine + N(6)-ubiquitinyl-[acceptor protein]-L-lysine.. The protein operates within protein modification; protein sumoylation. In terms of biological role, nuclear corepressor for KRAB domain-containing zinc finger proteins (KRAB-ZFPs). Mediates gene silencing by recruiting CHD3, a subunit of the nucleosome remodeling and deacetylation (NuRD) complex, and SETDB1 (which specifically methylates histone H3 at 'Lys-9' (H3K9me)) to the promoter regions of KRAB target genes. Enhances transcriptional repression by coordinating the increase in H3K9me, the decrease in histone H3 'Lys-9 and 'Lys-14' acetylation (H3K9ac and H3K14ac, respectively) and the disposition of HP1 proteins to silence gene expression. Recruitment of SETDB1 induces heterochromatinization. May play a role as a coactivator for CEBPB and NR3C1 in the transcriptional activation of ORM1. Also a corepressor for ERBB4. Inhibits E2F1 activity by stimulating E2F1-HDAC1 complex formation and inhibiting E2F1 acetylation. May serve as a partial backup to prevent E2F1-mediated apoptosis in the absence of RB1. Important regulator of CDKN1A/p21(CIP1). Has E3 SUMO-protein ligase activity toward itself via its PHD-type zinc finger. Specifically sumoylates IRF7, thereby inhibiting its transactivation activity. Ubiquitinates p53/TP53 leading to its proteasomal degradation; the function is enhanced by MAGEC2 and MAGEA2, and possibly MAGEA3 and MAGEA6. Mediates the nuclear localization of KOX1, ZNF268 and ZNF300 transcription factors. Probably forms a corepressor complex required for activated KRAS-mediated promoter hypermethylation and transcriptional silencing of tumor suppressor genes (TSGs) or other tumor-related genes in colorectal cancer (CRC) cells. Required to maintain a transcriptionally repressive state of genes in undifferentiated embryonic stem cells (ESCs). In ESCs, in collaboration with SETDB1, is also required for H3K9me3 and silencing of endogenous and introduced retroviruses in a DNA-methylation independent-pathway. Associates at promoter regions of tumor suppressor genes (TSGs) leading to their gene silencing. The SETDB1-TRIM28-ZNF274 complex may play a role in recruiting ATRX to the 3'-exons of zinc-finger coding genes with atypical chromatin signatures to establish or maintain/protect H3K9me3 at these transcriptionally active regions. Acts as a corepressor for ZFP568. This chain is Transcription intermediary factor 1-beta, found in Mus musculus (Mouse).